The primary structure comprises 255 residues: MLVMAGLGLYDERDVTLKTLDFAKKVDKIYAEFYTAILTGTTMEKVEETLQKPITVLDREKVEYETNKLIEEAKDKDIMFLTAGDPMVATTHVDIAVEARKKGIEVVIINAPSIYSAIGITGLQLYKFGKTTSIVFPEPNYFPETPYDVIKDNLKLGYHTLCLLDIQADKERFMTANEGLSALLEIEEKRNENVISGETHAAVVARAGSTKPGLYYGKIKDLINYDFGTPLHCVIIPGKLHFMEEDALKYLFENI.

Residues Leu-9, Asp-85, Val-88, 113-114 (SI), Leu-164, Ala-207, and His-232 contribute to the S-adenosyl-L-methionine site.

Belongs to the diphthine synthase family. As to quaternary structure, homodimer.

It catalyses the reaction 2-[(3S)-amino-3-carboxypropyl]-L-histidyl-[translation elongation factor 2] + 3 S-adenosyl-L-methionine = diphthine-[translation elongation factor 2] + 3 S-adenosyl-L-homocysteine + 3 H(+). Its pathway is protein modification; peptidyl-diphthamide biosynthesis. In terms of biological role, S-adenosyl-L-methionine-dependent methyltransferase that catalyzes the trimethylation of the amino group of the modified target histidine residue in translation elongation factor 2 (EF-2), to form an intermediate called diphthine. The three successive methylation reactions represent the second step of diphthamide biosynthesis. In Methanococcus maripaludis (strain C5 / ATCC BAA-1333), this protein is Diphthine synthase.